The chain runs to 141 residues: 3-hydroxyacyl-[acyl-carrier-protein] dehydratase FabZ (141 aa).

The active site involves histidine 48.

It belongs to the thioester dehydratase family. FabZ subfamily.

The protein localises to the cytoplasm. The catalysed reaction is a (3R)-hydroxyacyl-[ACP] = a (2E)-enoyl-[ACP] + H2O. Its function is as follows. Involved in unsaturated fatty acids biosynthesis. Catalyzes the dehydration of short chain beta-hydroxyacyl-ACPs and long chain saturated and unsaturated beta-hydroxyacyl-ACPs. The sequence is that of 3-hydroxyacyl-[acyl-carrier-protein] dehydratase FabZ from Bacillus velezensis (strain DSM 23117 / BGSC 10A6 / LMG 26770 / FZB42) (Bacillus amyloliquefaciens subsp. plantarum).